A 1436-amino-acid chain; its full sequence is ABC transporter C family member 15 (1436 aa).

7 helical membrane passes run 8–28 (IINK…IYLY), 129–149 (YIAT…PLIL), 165–185 (IYIG…NMAS), 238–258 (FFQY…IQIL), 261–281 (LGFL…VMLI), 349–369 (IIYW…VLVS), and 373–393 (TYTL…ITIL). Residues 128 to 412 (NYIATGLFVF…LPDCLHKFIS (285 aa)) enclose the ABC transmembrane type-1 1 domain. Positions 543 to 766 (ADYQDLLSIN…IDFEMILKEK (224 aa)) constitute an ABC transporter 1 domain. Residue 575–582 (GGVRSGKT) coordinates ATP. The ABC transmembrane type-1 2 domain maps to 865–1155 (KKYIRMGSSI…FMRQFGELES (291 aa)). 6 helical membrane-spanning segments follow: residues 873 to 893 (SISF…ILLL), 919 to 939 (LIYL…YLLI), 985 to 1005 (IDIL…CLVT), 1017 to 1039 (IAIP…NYSV), 1101 to 1121 (IGIR…LFSI), and 1127 to 1147 (GLSA…NWFM). The ABC transporter 2 domain occupies 1193–1426 (IEFKNVEIRY…STSRFSKLIK (234 aa)). Residue 1227–1234 (GRSGSGKS) coordinates ATP.

The protein belongs to the ABC transporter superfamily. ABCC family. Conjugate transporter (TC 3.A.1.208) subfamily.

The protein resides in the membrane. The protein is ABC transporter C family member 15 (abcC15) of Dictyostelium discoideum (Social amoeba).